The chain runs to 717 residues: Ubinuclein-2 (717 aa).

Disordered regions lie at residues 114–136 (KDGSDGEELDGAPDDDDYDTEDS), 166–308 (LERI…SAKS), and 620–717 (ADSS…NLPS). The segment covering 118–136 (DGEELDGAPDDDDYDTEDS) has biased composition (acidic residues). 2 stretches are compositionally biased toward polar residues: residues 214–246 (QSASPGPSSKKISNDSKTVQDSFSPLKAQNGND) and 285–308 (SSKSVHEQSNSPPGKSRPNVSAKS). Over residues 623-632 (SFERSKQQHE) the composition is skewed to basic and acidic residues. The Nuclear localization signal motif lies at 634 to 641 (LKRTSSLS). Residues 653–665 (KTEPALEETHLPA) are compositionally biased toward basic and acidic residues. The segment covering 675-705 (RQTHLKSKTHKQVQVHPQSKAHKQAQVHPKA) has biased composition (basic residues). Positions 706 to 717 (KTQTPPDLNLPS) are enriched in polar residues.

It belongs to the ubinuclein family. In terms of assembly, component of the HIRA complex made of UBN1, UBN2, ASF1A, CABIN1 and HIRA. Interacts with HIRA.

The protein resides in the nucleus. It localises to the nucleolus. Its function is as follows. May be required for replication-independent chromatin assembly. This is Ubinuclein-2 from Arabidopsis thaliana (Mouse-ear cress).